Reading from the N-terminus, the 185-residue chain is uncharacterized protein (185 aa).

3 helical membrane-spanning segments follow: residues 32-52 (LIFV…LLAF), 66-86 (LVTL…VLAV), and 155-175 (IGYG…FLVV).

It is found in the cell membrane. This is an uncharacterized protein from Bacillus subtilis (strain 168).